Consider the following 709-residue polypeptide: Fatty acid oxidation complex subunit alpha (709 aa).

The tract at residues 1-188 (MEKTFNLTRR…KMGLVNDVVP (188 aa)) is enoyl-CoA hydratase. The segment at 308 to 709 (RKVKKAVILG…EMAAEKTRFF (402 aa)) is 3-hydroxyacyl-CoA dehydrogenase.

In the N-terminal section; belongs to the enoyl-CoA hydratase/isomerase family. It in the central section; belongs to the 3-hydroxyacyl-CoA dehydrogenase family. As to quaternary structure, heterotetramer of two alpha chains (FadJ) and two beta chains (FadI).

It localises to the cytoplasm. The enzyme catalyses a (3S)-3-hydroxyacyl-CoA = a (2E)-enoyl-CoA + H2O. The catalysed reaction is a 4-saturated-(3S)-3-hydroxyacyl-CoA = a (3E)-enoyl-CoA + H2O. It carries out the reaction a (3S)-3-hydroxyacyl-CoA + NAD(+) = a 3-oxoacyl-CoA + NADH + H(+). It catalyses the reaction (3S)-3-hydroxybutanoyl-CoA = (3R)-3-hydroxybutanoyl-CoA. It functions in the pathway lipid metabolism; fatty acid beta-oxidation. Functionally, catalyzes the formation of a hydroxyacyl-CoA by addition of water on enoyl-CoA. Also exhibits 3-hydroxyacyl-CoA epimerase and 3-hydroxyacyl-CoA dehydrogenase activities. The polypeptide is Fatty acid oxidation complex subunit alpha (Shewanella sp. (strain MR-7)).